Reading from the N-terminus, the 767-residue chain is 5-methyltetrahydropteroyltriglutamate--homocysteine methyltransferase (767 aa).

5-methyltetrahydropteroyltri-L-glutamate is bound by residues 17 to 20 and lysine 117; that span reads RELK. Residues 441–443 and glutamate 494 contribute to the L-homocysteine site; that span reads IGS. L-methionine is bound by residues 441 to 443 and glutamate 494; that span reads IGS. Residues 525–526 and tryptophan 571 each bind 5-methyltetrahydropteroyltri-L-glutamate; that span reads RC. Position 609 (aspartate 609) interacts with L-homocysteine. Aspartate 609 is an L-methionine binding site. 5-methyltetrahydropteroyltri-L-glutamate is bound at residue glutamate 615. 3 residues coordinate Zn(2+): histidine 652, cysteine 654, and glutamate 676. Histidine 705 functions as the Proton donor in the catalytic mechanism. Residue cysteine 737 participates in Zn(2+) binding.

Belongs to the vitamin-B12 independent methionine synthase family. Requires Zn(2+) as cofactor.

The enzyme catalyses 5-methyltetrahydropteroyltri-L-glutamate + L-homocysteine = tetrahydropteroyltri-L-glutamate + L-methionine. It participates in amino-acid biosynthesis; L-methionine biosynthesis via de novo pathway; L-methionine from L-homocysteine (MetE route): step 1/1. In terms of biological role, catalyzes the transfer of a methyl group from 5-methyltetrahydrofolate to homocysteine resulting in methionine formation. This Bifidobacterium longum subsp. infantis (strain ATCC 15697 / DSM 20088 / JCM 1222 / NCTC 11817 / S12) protein is 5-methyltetrahydropteroyltriglutamate--homocysteine methyltransferase.